The following is a 245-amino-acid chain: uncharacterized protein (245 aa).

The first 19 residues, 1–19 (MKLTQFISYAILSLSGVQA), serve as a signal peptide directing secretion.

It is found in the secreted. This is an uncharacterized protein from Arthroderma benhamiae (strain ATCC MYA-4681 / CBS 112371) (Trichophyton mentagrophytes).